The following is a 104-amino-acid chain: Protamine-3 (104 aa).

Residues 1-104 (MGSRCAKLST…PSPEPKQKHS (104 aa)) form a disordered region. The segment covering 45-70 (EGEEEEEDEEDEEEEDDDEEDEEEEQ) has biased composition (acidic residues). Phosphoserine is present on serine 96.

The protein belongs to the protamine P3 family. As to expression, testis.

It is found in the nucleus. The protein localises to the chromosome. Functionally, protamines substitute for histones in the chromatin of sperm during the haploid phase of spermatogenesis. They compact sperm DNA into a highly condensed, stable and inactive complex. The chain is Protamine-3 (Prm3) from Rattus norvegicus (Rat).